We begin with the raw amino-acid sequence, 201 residues long: Probable GTP-binding protein EngB (201 aa).

One can recognise an EngB-type G domain in the interval threonine 22–glutamate 197. GTP is bound by residues glycine 30–serine 37, glycine 57–leucine 61, aspartate 75–glycine 78, threonine 142–aspartate 145, and isoleucine 175–serine 178. The Mg(2+) site is built by serine 37 and threonine 59.

The protein belongs to the TRAFAC class TrmE-Era-EngA-EngB-Septin-like GTPase superfamily. EngB GTPase family. The cofactor is Mg(2+).

Functionally, necessary for normal cell division and for the maintenance of normal septation. The chain is Probable GTP-binding protein EngB from Bacteroides fragilis (strain YCH46).